The chain runs to 543 residues: CTP synthase (543 aa).

An amidoligase domain region spans residues 1–265 (MARFIFITGG…DSEVLRAFGI (265 aa)). CTP is bound at residue Ser-13. Ser-13 contacts UTP. 14 to 19 (SLGKGL) is a binding site for ATP. Position 54 (Tyr-54) interacts with L-glutamine. Asp-71 contributes to the ATP binding site. 2 residues coordinate Mg(2+): Asp-71 and Glu-139. Residues 146–148 (DIE), 186–191 (KTKPTQ), and Lys-222 each bind CTP. UTP is bound by residues 186–191 (KTKPTQ) and Lys-222. In terms of domain architecture, Glutamine amidotransferase type-1 spans 291-542 (TIGVVGKYVS…IEAAVKQSRL (252 aa)). L-glutamine is bound at residue Gly-354. Catalysis depends on Cys-381, which acts as the Nucleophile; for glutamine hydrolysis. Residues 382 to 385 (LGMQ), Glu-405, and Arg-470 each bind L-glutamine. Catalysis depends on residues His-515 and Glu-517.

Belongs to the CTP synthase family. As to quaternary structure, homotetramer.

It carries out the reaction UTP + L-glutamine + ATP + H2O = CTP + L-glutamate + ADP + phosphate + 2 H(+). The enzyme catalyses L-glutamine + H2O = L-glutamate + NH4(+). The catalysed reaction is UTP + NH4(+) + ATP = CTP + ADP + phosphate + 2 H(+). It functions in the pathway pyrimidine metabolism; CTP biosynthesis via de novo pathway; CTP from UDP: step 2/2. With respect to regulation, allosterically activated by GTP, when glutamine is the substrate; GTP has no effect on the reaction when ammonia is the substrate. The allosteric effector GTP functions by stabilizing the protein conformation that binds the tetrahedral intermediate(s) formed during glutamine hydrolysis. Inhibited by the product CTP, via allosteric rather than competitive inhibition. In terms of biological role, catalyzes the ATP-dependent amination of UTP to CTP with either L-glutamine or ammonia as the source of nitrogen. Regulates intracellular CTP levels through interactions with the four ribonucleotide triphosphates. The polypeptide is CTP synthase (Sphingopyxis alaskensis (strain DSM 13593 / LMG 18877 / RB2256) (Sphingomonas alaskensis)).